A 145-amino-acid chain; its full sequence is MYPAHLLVLLAVCVSLLGASDMPPQPLNLVQFSNMIQCANHGRRPTSNYMDYGCYCGKGGSGTPVDELDRCCKIHDDCYGEAEKSQKCAPYWTWYTWKCGSDGPQCDDSETGSRRFVCGYDATAAKCFAKAPYNKENYNIETRCQ.

A signal peptide spans 1–19; that stretch reads MYPAHLLVLLAVCVSLLGA. A propeptide spanning residues 20-27 is cleaved from the precursor; that stretch reads SDMPPQPL. Cystine bridges form between Cys38–Cys99, Cys54–Cys144, Cys56–Cys72, Cys71–Cys127, and Cys106–Cys118. Ca(2+)-binding residues include Tyr55, Gly57, and Gly59. The active site involves His75. Ca(2+) is bound at residue Asp76. Asp121 is a catalytic residue.

This sequence belongs to the phospholipase A2 family. Group I subfamily. D49 sub-subfamily. Ca(2+) serves as cofactor. Post-translationally, this enzyme lacks two of the seven disulfide bonds found in similar PLA2 proteins. As to expression, expressed by the venom gland.

It is found in the secreted. It carries out the reaction a 1,2-diacyl-sn-glycero-3-phosphocholine + H2O = a 1-acyl-sn-glycero-3-phosphocholine + a fatty acid + H(+). In terms of biological role, snake venom phospholipase A2 (PLA2) that inhibits collagen-induced platelet aggregation. PLA2 catalyzes the calcium-dependent hydrolysis of the 2-acyl groups in 3-sn-phosphoglycerides. The protein is Acidic phospholipase A2 S1-11 of Austrelaps superbus (Lowland copperhead snake).